The primary structure comprises 734 residues: Photosystem I P700 chlorophyll a apoprotein A2 (734 aa).

8 helical membrane passes run 46–69, 135–158, 175–199, 273–291, 330–353, 369–395, 417–439, and 517–535; these read IFAS…FHVA, LYTG…LHLQ, LNHH…HVAI, MAHH…GHMY, LHFQ…QHMY, AALY…IFFL, AIIS…LYVH, and FLVH…LILV. 2 residues coordinate [4Fe-4S] cluster: Cys-559 and Cys-568. Transmembrane regions (helical) follow at residues 575 to 596 and 643 to 665; these read AFYL…YWHW and LSVW…MFLI. His-654, Met-662, and Tyr-670 together coordinate chlorophyll a. Trp-671 provides a ligand contact to phylloquinone. The helical transmembrane segment at 707-727 threads the bilayer; that stretch reads LVGLAHFSVGYIFTYAAFLIA.

This sequence belongs to the PsaA/PsaB family. As to quaternary structure, the PsaA/B heterodimer binds the P700 chlorophyll special pair and subsequent electron acceptors. PSI consists of a core antenna complex that captures photons, and an electron transfer chain that converts photonic excitation into a charge separation. The eukaryotic PSI reaction center is composed of at least 11 subunits. The cofactor is P700 is a chlorophyll a/chlorophyll a' dimer, A0 is one or more chlorophyll a, A1 is one or both phylloquinones and FX is a shared 4Fe-4S iron-sulfur center..

Its subcellular location is the plastid. The protein localises to the chloroplast thylakoid membrane. It catalyses the reaction reduced [plastocyanin] + hnu + oxidized [2Fe-2S]-[ferredoxin] = oxidized [plastocyanin] + reduced [2Fe-2S]-[ferredoxin]. In terms of biological role, psaA and PsaB bind P700, the primary electron donor of photosystem I (PSI), as well as the electron acceptors A0, A1 and FX. PSI is a plastocyanin-ferredoxin oxidoreductase, converting photonic excitation into a charge separation, which transfers an electron from the donor P700 chlorophyll pair to the spectroscopically characterized acceptors A0, A1, FX, FA and FB in turn. Oxidized P700 is reduced on the lumenal side of the thylakoid membrane by plastocyanin. This is Photosystem I P700 chlorophyll a apoprotein A2 from Adiantum capillus-veneris (Maidenhair fern).